We begin with the raw amino-acid sequence, 500 residues long: Cysteine-rich secretory protein LCCL domain-containing 1 (500 aa).

The first 23 residues, 1–23 (MKCTAREWLRVTTVLFMARAIPA), serve as a signal peptide directing secretion. An SCP domain is found at 66–206 (LDLHNKLRSQ…PKAVYLVCNY (141 aa)). Over residues 254-280 (EETNEIERQQSQVHDTHVRTRSDDSSR) the composition is skewed to basic and acidic residues. The disordered stretch occupies residues 254–281 (EETNEIERQQSQVHDTHVRTRSDDSSRN). LCCL domains lie at 289–384 (MSQI…ANSF) and 390–492 (TVQA…PGGK). Intrachain disulfides connect cysteine 295–cysteine 313, cysteine 317–cysteine 337, cysteine 396–cysteine 418, and cysteine 422–cysteine 445.

The protein belongs to the CRISP family.

It localises to the secreted. The chain is Cysteine-rich secretory protein LCCL domain-containing 1 (CRISPLD1) from Homo sapiens (Human).